A 200-amino-acid polypeptide reads, in one-letter code: MKIYVPFKPTNPKSRLSKIMSEDERREFAFQLLLDVLDCCEEAVVLSASRDERLRDLKHEVDERDLDTAVTSRIKKEDSAFVMSDLALISKKIVKKFLDTDGDVVIAPGRKGGTNMLLSRSREFYTSYHYGSFLKHVRIAEKLGLNLSIFDSFYASIDIDDESDLLELMLHGKGKRSYEYLESIGFYVDFSEKEPKLKRA.

Belongs to the CofC family. In terms of assembly, homodimer.

The catalysed reaction is (2S)-2-phospholactate + GTP + H(+) = (2S)-lactyl-2-diphospho-5'-guanosine + diphosphate. Its pathway is cofactor biosynthesis; coenzyme F420 biosynthesis. Guanylyltransferase that catalyzes the activation of (2S)-2-phospholactate (2-PL) as (2S)-lactyl-2-diphospho-5'-guanosine, via the condensation of 2-PL with GTP. It is involved in the biosynthesis of coenzyme F420, a hydride carrier cofactor. The chain is 2-phospho-L-lactate guanylyltransferase from Ferroglobus placidus (strain DSM 10642 / AEDII12DO).